The following is a 495-amino-acid chain: Cyclic GMP-AMP synthase (495 aa).

The interval 1 to 128 (MAARRGKSTR…AGATELAAPA (128 aa)) is disordered. The DNA-binding stretch occupies residues 1–134 (MAARRGKSTR…AAPARMEAPP (134 aa)). Lysine 7 bears the N6-acetyllysine mark. A Phosphoserine modification is found at serine 13. Composition is skewed to basic and acidic residues over residues 52-76 (CRREKSGPDPREKPQVRTRTARAED) and 105-116 (RAREARSARELR). N6-acetyllysine is present on lysine 56. Serine 57 carries the post-translational modification Phosphoserine. Positions 57 to 68 (SGPDPREKPQVR) are required for association with the cell membrane. The required for activation upon DNA viral infection stretch occupies residues 103–134 (SCRAREARSARELRPQAGATELAAPARMEAPP). Residues 143–148 (LEKVRL) carry the Nuclear export signal motif. An N6-lactoyllysine modification is found at lysine 145. Residues 147–190 (RLSRHEISEAAEVVNWVVEHLLRRLQGGESEFKGVALLRTGSYY) are DNA-binding. Glutamate 165 is modified (polyADP-ribosyl glutamic acid). GTP is bound at residue threonine 186. Serine 188 is modified (phosphoserine). Residue serine 188 coordinates ATP. The residue at position 190 (tyrosine 190) is a Phosphotyrosine. Glutamate 200 and aspartate 202 together coordinate Mg(2+). Position 202 (aspartate 202) interacts with 2',3'-cGAMP. A Glycyl lysine isopeptide (Lys-Gly) (interchain with G-Cter in SUMO) cross-link involves residue lysine 206. Residue lysine 260 forms a Glycyl lysine isopeptide (Lys-Gly) (interchain with G-Cter in ubiquitin) linkage. Glutamate 261 carries the 5-glutamyl polyglutamate modification. Positions 268 to 278 (GVTVERKRRGS) match the Nuclear localization signal motif. Serine 278 bears the Phosphoserine mark. Residue aspartate 294 coordinates GTP. Aspartate 294 contacts Mg(2+). Aspartate 294 contributes to the 2',3'-cGAMP binding site. Residues 316 to 357 (SQWLGAKVKNNLKRQPFYLVPKHAKEGSGFQEETWRLSFSHI) form an interaction with collided ribosomes region. Lysine 322 participates in a covalent cross-link: Glycyl lysine isopeptide (Lys-Gly) (interchain with G-Cter in SUMO); alternate. Residue lysine 322 forms a Glycyl lysine isopeptide (Lys-Gly) (interchain with G-Cter in ubiquitin); alternate linkage. 2',3'-cGAMP is bound by residues lysine 337 and arginine 351. 351–358 (RLSFSHIE) contributes to the GTP binding site. Glutamate 358 is an ATP binding site. An N6-acetyllysine modification is found at lysine 359. Lysine 359 participates in a covalent cross-link: Glycyl lysine isopeptide (Lys-Gly) (interchain with G-Cter in SUMO); alternate. A Glycyl lysine isopeptide (Lys-Gly) (interchain with G-Cter in ubiquitin); alternate cross-link involves residue lysine 359. The interval 359-382 (KDILKNHGQSKTCCEIDGVKCCRK) is DNA-binding. Histidine 365 is a binding site for Zn(2+). The residue at position 369 (lysine 369) is an N6-acetyllysine. Lysine 369 participates in a covalent cross-link: Glycyl lysine isopeptide (Lys-Gly) (interchain with G-Cter in SUMO). Cysteine 371, cysteine 372, and cysteine 379 together coordinate Zn(2+). Residues cysteine 379 and cysteine 380 are each lipidated (S-palmitoyl cysteine). Glycyl lysine isopeptide (Lys-Gly) (interchain with G-Cter in ubiquitin) cross-links involve residues lysine 386, lysine 389, lysine 396, and lysine 397. An N6-acetyllysine modification is found at lysine 389. Lysine 389 contacts ATP. Serine 410 carries the phosphoserine modification. 410-414 (SYHVK) contributes to the ATP binding site. Residue cysteine 449 is the site of S-palmitoyl cysteine attachment. An N6-methyllysine modification is found at lysine 481.

Belongs to the mab-21 family. In terms of assembly, monomer in the absence of DNA. Homodimer in presence of dsDNA: forms a 2:2 dimer with two enzymes binding to two DNA molecules. Interacts with nucleosomes; interaction is mainly mediated via histones H2A and H2B and inactivates the nucleotidyltransferase activity by blocking DNA-binding and subsequent activation. Interacts with PQBP1 (via WW domain). Interacts with TRIM14; this interaction recruits USP14, leading to deubiquitinate and stabilize CGAS and promote type I interferon production. Interacts with ZCCHC3; promoting sensing of dsDNA by CGAS. Interacts (when not monomethylated) with (poly-ADP-ribosylated) PARP1; interaction takes place in the nucleus and prevents the formation of the PARP1-TIMELESS complex. Interacts (when monomethylated) with SGF29; interaction with SGF29 prevents interaction with PARP1. Interacts with PCBP2; preventing the formation of liquid-like droplets in which CGAS is activated. Interacts with IRGM; promoting CGAS degradation. The cofactor is Mg(2+). Mn(2+) is required as a cofactor. It depends on Zn(2+) as a cofactor. Post-translationally, the N-terminal disordered part (1-134) is phosphorylated by AURKB during the G2-M transition, blocking CGAS liquid phase separation and preventing activation. Phosphorylation at Tyr-190 by BLK promotes cytosolic retention. Localizes into the nucleus following dephosphorylation at Tyr-190. Phosphorylation at Ser-410 activates the nucleotidyltransferase activity. Dephosphorylation at Ser-410 by PPP6C impairs its ability to bind GTP, thereby inactivating it. Phosphorylation at Ser-188 by PRKDC inhibits its cyclic GMP-AMP synthase activity by impairing homodimerization and activation. Phosphorylation at Ser-278 by AKT (AKT1, AKT2 or AKT3) suppresses the nucleotidyltransferase activity. Phosphorylation at Ser-278 by CDK1 during mitosis leads to its inhibition, thereby preventing CGAS activation by self-DNA during mitosis. Dephosphorylated at Ser-278 by protein phosphatase PP1 upon mitotic exit. In terms of processing, ubiquitinated at Lys-389 via 'Lys-48'-linked polyubiquitin chains, leading to its SQSTM1-mediated autophagic degradation. Interaction with TRIM14 promotes recruitment of USP14, leading to deubiquitinate Lys-389 and stabilize CGAS. Ubiquitinated at Lys-359 by RNF185 via 'Lys-27'-linked polyubiquitination, promoting CGAS cyclic GMP-AMP synthase activity. Monoubiquitination at Lys-322 by TRIM56 promotes oligomerization and subsequent activation. Monoubiquitination by TRIM41 promotes CGAS activation. Ubiquitination at Lys-260 via 'Lys-48'-linked polyubiquitination promotes its degradation. Deubiquitination at Lys-260 by USP29 promotes its stabilization. Deubiquitinated by USP27X, promoting its stabilization. Ubiquitinated at Lys-386 via 'Lys-63'-linked polyubiquitin chains by MARCHF8, leading to the inhibition of its DNA binding ability. In cycling cells, nucleosome-bound CGAS is ubiquitinated at Lys-396 and Lys-397 via 'Lys-48'-linked polyubiquitin chains by the ECS(SPSB3) complex, leading to its degradation: ubiquitination and degradation of nuclear CGAS during G1 and G2 phases is required to promote low intranuclear CGAS abundance before the next mitotic cycle. Sumoylated at Lys-206 by TRIM38 in uninfected cells and during the early phase of viral infection, promoting its stability by preventing ubiquitination at Lys-260 and subsequent degradation. Desumoylated by SENP2 during the late phase of viral infection. Sumoylation at Lys-322, Lys-359 and Lys-369 prevents DNA-binding, oligomerization and nucleotidyltransferase activity. Desumoylation at Lys-322, Lys-359 and Lys-369 by SENP7 relieves inhibition and activates CGAS. Post-translationally, polyglutamylated by TTLL6 at Glu-261, leading to impair DNA-binding activity. Deglutamylated by AGBL5/CCP5 and AGBL6/CCP6. In terms of processing, acetylation at Lys-359, Lys-369 and Lys-389 inhibits the cyclic GMP-AMP synthase activity. Deacetylated upon cytosolic DNA challenge such as viral infections. Acetylation by KAT5 increases the cyclic GMP-AMP synthase activity by promoting DNA-binding and subsequent activation. Proteolytically cleaved by apoptotic caspases during apoptosis, leading to its inactivation. The damage of the nucleus and the mitochondria during apoptosis leads to leakage of nuclear and mitochondrial DNA, which activate CGAS: cleavage and inactivation during apoptosis in required to prevent cytokine overproduction. Cleaved by CASP7 and CASP3 during virus-induced apoptosis, thereby inactivating it and preventing cytokine overproduction. Cleaved by CASP1 upon DNA virus infection; the cleavage impairs cGAMP production. Also cleaved by the pyroptotic CASP4 during non-canonical inflammasome activation; does not cut at the same sites than CASP1. Post-translationally, degraded via selective autophagy following interaction with IRGM. IRGM promotes CGAS recruitment to autophagosome membranes, promoting its SQSTM1/p62-dependent autophagic degradation. In terms of processing, poly-ADP-ribosylation at Glu-165 by PARP1 impairs DNA-binding, thereby preventing the cyclic GMP-AMP synthase activity. Palmitoylation at Cys-449 by ZDHHC18 impairs DNA-binding, thereby preventing the cyclic GMP-AMP synthase activity. Palmitoylation at Cys-379 and Cys-380 by ZDHHC9 promotes homodimerization and cyclic GMP-AMP synthase activity. Depalmitoylation at Cys-379 and Cys-380 by LYPLAL1 impairs homodimerization and cyclic GMP-AMP synthase activity. Post-translationally, monomethylated at Lys-481 by SETD7. Monomethylation promotes interaction with SGF29, preventing interaction between PARP1 nad SGF29. Demethylation by RIOX1 promotes interaction with PARP1, followed by PARP1 inactivation. In terms of processing, lactylation by AARS2 prevents ability to undergo liquid-liquid phase separation (LLPS), thereby inhibiting CGAS activation.

It is found in the nucleus. It localises to the chromosome. The protein resides in the cell membrane. The protein localises to the cytoplasm. Its subcellular location is the cytosol. It catalyses the reaction GTP + ATP = 2',3'-cGAMP + 2 diphosphate. The catalysed reaction is GTP + ATP = pppGp(2'-5')A + diphosphate. The enzyme catalyses pppGp(2'-5')A = 2',3'-cGAMP + diphosphate. The enzyme activity is strongly increased by double-stranded DNA (dsDNA), but not by single-stranded DNA or RNA. DNA-binding induces the formation of liquid-like droplets in which CGAS is activated. Liquid-like droplets also create a selective environment that restricts entry of negative regulators, such as TREX1 or BANF1/BAF, allowing sensing of DNA. A number of mechanisms exist to restrict its activity toward self-DNA. The nucleotidyltransferase activity is inhibited in the nucleus via its association with nucleosomes: interacts with the acidic patch of histones H2A and H2B, thereby blocking DNA-binding and subsequent activation. CGAS is also inactive when associated with mitotic chromatin. Chromatin-bound CGAS cannot be activated by exogenous DNA in mitotic cells: phosphorylation of the N-terminal disordered part by AURKB during the G2-M transition blocks CGAS liquid phase separation and activation. Activity toward self-DNA is inhibited by BANF1/BAF upon acute loss of nuclear membrane integrity: BANF1/BAF acts by outcompeting CGAS for DNA-binding, thereby preventing CGAS activation. DNA-induced activation at micronuclei is also limited by TREX1, which degrades micronuclear DNA upon nuclear envelope rupture, thereby preventing CGAS activation. CGAS can be released from nucleosomes and activated by MRE11 component of the MRN complex, which displaces CGAS from acidic-patch-mediated sequestration. Acetylation at Lys-359, Lys-369 and Lys-389 inhibits the cyclic GMP-AMP synthase activity. Acetylation by KAT5 increases the cyclic GMP-AMP synthase activity by promoting DNA-binding and subsequent activation. Phosphorylation at Ser-278 suppresses the nucleotidyltransferase activity. Phosphorylation at Ser-410 promotes the cyclic GMP-AMP synthase activity. Phosphorylation at Ser-188 inhibits its cyclic GMP-AMP synthase activity. Ubiquitination at Lys-359 via 'Lys-27'-linked polyubiquitination enhances the cyclic GMP-AMP synthase activity. Monoubiquitination at Lys-322 promotes oligomerization and subsequent activation. Sumoylation at Lys-322, Lys-359 and Lys-369 prevents DNA-binding, oligomerization and nucleotidyltransferase activity. The enzyme activity is impaired by the cleavage by CASP1. In addition to DNA, also activated by collided ribosomes upon translation stress: specifically binds collided ribosomes, promoting its activation and triggering type-I interferon production. Nucleotidyltransferase that catalyzes the formation of cyclic GMP-AMP (2',3'-cGAMP) from ATP and GTP and plays a key role in innate immunity. Catalysis involves both the formation of a 2',5' phosphodiester linkage at the GpA step and the formation of a 3',5' phosphodiester linkage at the ApG step, producing c[G(2',5')pA(3',5')p]. Acts as a key DNA sensor: directly binds double-stranded DNA (dsDNA), inducing the formation of liquid-like droplets in which CGAS is activated, leading to synthesis of 2',3'-cGAMP, a second messenger that binds to and activates STING1, thereby triggering type-I interferon production. Preferentially binds long dsDNA (around 45 bp) and forms ladder-like networks that function cooperatively to stabilize individual cGAS-dsDNA complexes. Acts as a key foreign DNA sensor, the presence of double-stranded DNA (dsDNA) in the cytoplasm being a danger signal that triggers the immune responses. Has antiviral activity by sensing the presence of dsDNA from DNA viruses in the cytoplasm. Also acts as an innate immune sensor of infection by retroviruses by detecting the presence of reverse-transcribed DNA in the cytosol. Detection of retroviral reverse-transcribed DNA in the cytosol may be indirect and be mediated via interaction with PQBP1, which directly binds reverse-transcribed retroviral DNA. Also detects the presence of DNA from bacteria. 2',3'-cGAMP can be transferred from producing cells to neighboring cells through gap junctions, leading to promote STING1 activation and convey immune response to connecting cells. 2',3'-cGAMP can also be transferred between cells by virtue of packaging within viral particles contributing to IFN-induction in newly infected cells in a cGAS-independent but STING1-dependent manner. Also senses the presence of neutrophil extracellular traps (NETs) that are translocated to the cytosol following phagocytosis, leading to synthesis of 2',3'-cGAMP. In addition to foreign DNA, can also be activated by endogenous nuclear or mitochondrial DNA. When self-DNA leaks into the cytosol during cellular stress (such as mitochondrial stress, DNA damage, mitotic arrest or senescence), or is present in form of cytosolic micronuclei, CGAS is activated leading to a state of sterile inflammation. Acts as a regulator of cellular senescence by binding to cytosolic chromatin fragments that are present in senescent cells, leading to trigger type-I interferon production via STING1 and promote cellular senescence. Also involved in the inflammatory response to genome instability and double-stranded DNA breaks: acts by localizing to micronuclei arising from genome instability. Micronuclei, which are frequently found in cancer cells, consist of chromatin surrounded by their own nuclear membrane: following breakdown of the micronuclear envelope, a process associated with chromothripsis, CGAS binds self-DNA exposed to the cytosol, leading to 2',3'-cGAMP synthesis and subsequent activation of STING1 and type-I interferon production. In a healthy cell, CGAS is however kept inactive even in cellular events that directly expose it to self-DNA, such as mitosis, when cGAS associates with chromatin directly after nuclear envelope breakdown or remains in the form of postmitotic persistent nuclear cGAS pools bound to chromatin. Nuclear CGAS is inactivated by chromatin via direct interaction with nucleosomes, which block CGAS from DNA binding and thus prevent CGAS-induced autoimmunity. Also acts as a suppressor of DNA repair in response to DNA damage: inhibits homologous recombination repair by interacting with PARP1, the CGAS-PARP1 interaction leading to impede the formation of the PARP1-TIMELESS complex. In addition to DNA, also sense translation stress: in response to translation stress, translocates to the cytosol and associates with collided ribosomes, promoting its activation and triggering type-I interferon production. This Sus scrofa (Pig) protein is Cyclic GMP-AMP synthase.